A 368-amino-acid chain; its full sequence is Endophilin-A2 (368 aa).

Residues 1–21 (MSVAGLKKQFYKASQLVSEKV) form a membrane-binding amphipathic helix region. The 232-residue stretch at 18-249 (SEKVGGAEGT…LKRRVREASS (232 aa)) folds into the BAR domain. Residues 60 to 87 (PNPASRAKLTMLNTVSKIRGQVKNPGYP) are required for dimerization upon membrane association. Residues 180–250 (DEELRQALEK…KRRVREASSR (71 aa)) adopt a coiled-coil conformation. Residues 218 to 254 (LVDAQLDYHRQAVQILEELADKLKRRVREASSRPRRE) form an interaction with ARC region. The disordered stretch occupies residues 243–309 (RVREASSRPR…SKSMPPLDQP (67 aa)). A compositionally biased stretch (basic and acidic residues) spans 245 to 261 (REASSRPRREFKPRPQE). Serine 288 carries the post-translational modification Phosphoserine. Threonine 298 is subject to Phosphothreonine. The region spanning 306 to 365 (LDQPSCKALYDFEPENDGELGFREGDLITLTNQIDENWYEGMLHGQSGFFPLSYVQVLVP) is the SH3 domain. The residue at position 315 (tyrosine 315) is a Phosphotyrosine.

This sequence belongs to the endophilin family. As to quaternary structure, interacts with ARC, SYNJ1 and DNM1. Interacts with PDCD6IP. Interacts with BIN2. Detected in brain and testis (at protein level). Ubiquitous.

It is found in the cytoplasm. Its subcellular location is the early endosome membrane. It localises to the cell projection. The protein resides in the podosome. In terms of biological role, implicated in endocytosis. May recruit other proteins to membranes with high curvature. In Rattus norvegicus (Rat), this protein is Endophilin-A2 (Sh3gl1).